Here is a 102-residue protein sequence, read N- to C-terminus: MYTKEKINELMEKAQVMKKEMEKIQKDIKMTKIKGESGAGLVTIFMNGNYNCRKTKINDEIWNEKNKILIQDLITSAINNAVNKITELQKKKIILKTPFHNE.

It belongs to the YbaB/EbfC family. In terms of assembly, homodimer.

It is found in the cytoplasm. It localises to the nucleoid. Functionally, binds to DNA and alters its conformation. May be involved in regulation of gene expression, nucleoid organization and DNA protection. This is Nucleoid-associated protein BCc_301 from Buchnera aphidicola subsp. Cinara cedri (strain Cc).